A 784-amino-acid polypeptide reads, in one-letter code: Toll-like receptor 2 (784 aa).

The signal sequence occupies residues 1–18 (MPHTLWMVWVLGVIISLS). Residues 19 to 587 (KEESSNQASL…VRLSVSECHR (569 aa)) are Extracellular-facing. Cys30 and Cys36 are joined by a disulfide. 19 LRR repeats span residues 54–77 (VKSL…RYVN), 78–101 (LQAL…SLGR), 102–125 (LEHL…PLSS), 126–150 (LKFL…HLTK), 151–175 (LRIL…GLTF), 176–199 (LEEL…SIQN), 200–223 (VSHL…LTSS), 224–250 (VECL…TNSL), 251–278 (IKKF…QISG), 279–308 (LLEL…DPGK), 309–337 (VETV…LTER), 338–361 (VKRI…HLKS), 362–388 (LEYL…AWPS), 389–414 (LQTL…TLKN), 415–437 (LTNL…WPEK), 438–457 (MKYL…CIPK), 458–478 (TLEI…NLPQ), 479–500 (LKEL…LLPM), and 501–524 (LLVL…SFHT). An N-linked (GlcNAc...) asparagine glycan is attached at Asn114. A glycan (N-linked (GlcNAc...) asparagine) is linked at Asn199. Cys353 and Cys382 are joined by a disulfide. Asn414 carries an N-linked (GlcNAc...) asparagine glycan. A disulfide bond links Cys432 and Cys454. An N-linked (GlcNAc...) asparagine glycan is attached at Asn442. The LRRCT domain occupies 525 to 579 (LKTLEAGGNNFICSCEFLSFTQEQQALAKVLVDWPANYLCDSPSHVRGQRVQDVR). The chain crosses the membrane as a helical span at residues 588 to 608 (AALVSGMCCALFLLILLMGVL). Residues 609 to 784 (CHRFHGLWYM…WVNLRAAIKS (176 aa)) are Cytoplasmic-facing. The TIR domain occupies 639-782 (ICYDAFVSYS…GFWVNLRAAI (144 aa)). Lys754 participates in a covalent cross-link: Glycyl lysine isopeptide (Lys-Gly) (interchain with G-Cter in ubiquitin). Positions 761 to 778 (YLEWPMDEARQEGFWVNL) match the ATG16L1-binding motif motif.

It belongs to the Toll-like receptor family. In terms of assembly, interacts with LY96, TLR1 and TLR6 (via extracellular domain). TLR2 seems to exist in heterodimers with either TLR1 or TLR6 before stimulation by the ligand. The heterodimers form bigger oligomers in response to their corresponding ligands as well as further heterotypic associations with other receptors such as CD14 and/or CD36. Binds MYD88 (via TIR domain). Interacts with TICAM1. Interacts with CNPY3. Interacts with ATG16L1. Interacts with PPP1R11. Interacts with TICAM2. Interacts with TIRAP. In terms of processing, ubiquitinated at Lys-754 by PPP1R11, leading to its degradation. Deubiquitinated by USP2. Post-translationally, glycosylation of Asn-442 is critical for secretion of the N-terminal ectodomain of TLR2.

The protein localises to the membrane. It localises to the cytoplasmic vesicle. Its subcellular location is the phagosome membrane. The protein resides in the membrane raft. In terms of biological role, cooperates with LY96 to mediate the innate immune response to bacterial lipoproteins and other microbial cell wall components. Cooperates with TLR1 or TLR6 to mediate the innate immune response to bacterial lipoproteins or lipopeptides. Acts via MYD88 and TRAF6, leading to NF-kappa-B activation, cytokine secretion and the inflammatory response. May also promote apoptosis in response to lipoproteins. Forms activation clusters composed of several receptors depending on the ligand, these clusters trigger signaling from the cell surface and subsequently are targeted to the Golgi in a lipid-raft dependent pathway. Forms the cluster TLR2:TLR6:CD14:CD36 in response to diacylated lipopeptides and TLR2:TLR1:CD14 in response to triacylated lipopeptides. The chain is Toll-like receptor 2 (TLR2) from Macaca fascicularis (Crab-eating macaque).